The chain runs to 477 residues: ATP synthase subunit beta (477 aa).

Position 163 to 170 (163 to 170) interacts with ATP; the sequence is GGAGVGKT.

Belongs to the ATPase alpha/beta chains family. F-type ATPases have 2 components, CF(1) - the catalytic core - and CF(0) - the membrane proton channel. CF(1) has five subunits: alpha(3), beta(3), gamma(1), delta(1), epsilon(1). CF(0) has four main subunits: a(1), b(1), b'(1) and c(9-12).

It is found in the cellular thylakoid membrane. The enzyme catalyses ATP + H2O + 4 H(+)(in) = ADP + phosphate + 5 H(+)(out). Functionally, produces ATP from ADP in the presence of a proton gradient across the membrane. The catalytic sites are hosted primarily by the beta subunits. The chain is ATP synthase subunit beta from Synechococcus sp. (strain JA-3-3Ab) (Cyanobacteria bacterium Yellowstone A-Prime).